Reading from the N-terminus, the 144-residue chain is RNA-binding protein 1 (144 aa).

Residues 11–84 (CKVYVGNLGS…TRIRVEMSSG (74 aa)) form the RRM domain. Residues 78 to 115 (RVEMSSGRSRDRRRGEGGSSGRSGSGRYRITPSARTTS) form a disordered region.

It belongs to the splicing factor SR family. As to quaternary structure, interacts with x16 (via Arg/Ser-rich region). Extensively phosphorylated on serine residues in the RS domain. In terms of processing, the tandem heptapeptide repeats in the C-terminal domain (CTD) can be highly phosphorylated. The phosphorylation activates Pol II. Phosphorylation occurs at residues 'Ser-2', 'Ser-5' and 'Ser-7' of the heptapeptide repeat and is mediated by P-TEFb. Dephosphorylated by the INTAC complex when transcripts are unfavorably configured for transcriptional elongation, leading to premature transcription termination: dephosphorylation is mediated by the mts/PP2A component of the INTAC complex. As to expression, ubiquitous.

Its subcellular location is the nucleus. Its function is as follows. Contributes to the activation of female-specific DSX splicing in vivo by recognizing the RBP1 target sequences within the purine-rich polypyrimidine tract of the female-specific 3' splice site. The polypeptide is RNA-binding protein 1 (Rbp1) (Drosophila melanogaster (Fruit fly)).